The sequence spans 132 residues: Small ribosomal subunit protein uS8 (132 aa).

It belongs to the universal ribosomal protein uS8 family. As to quaternary structure, part of the 30S ribosomal subunit. Contacts proteins S5 and S12.

Its function is as follows. One of the primary rRNA binding proteins, it binds directly to 16S rRNA central domain where it helps coordinate assembly of the platform of the 30S subunit. This chain is Small ribosomal subunit protein uS8, found in Gluconobacter oxydans (strain 621H) (Gluconobacter suboxydans).